An 860-amino-acid polypeptide reads, in one-letter code: DNA gyrase subunit A (860 aa).

The Topo IIA-type catalytic domain maps to 34 to 503 (LPDARDGLKP…EDGELIDTDL (470 aa)). The O-(5'-phospho-DNA)-tyrosine intermediate role is filled by Tyr-122. Residues 530–536 (QNRATRG) carry the GyrA-box motif.

It belongs to the type II topoisomerase GyrA/ParC subunit family. As to quaternary structure, heterotetramer, composed of two GyrA and two GyrB chains. In the heterotetramer, GyrA contains the active site tyrosine that forms a transient covalent intermediate with DNA, while GyrB binds cofactors and catalyzes ATP hydrolysis.

It localises to the cytoplasm. It catalyses the reaction ATP-dependent breakage, passage and rejoining of double-stranded DNA.. In terms of biological role, a type II topoisomerase that negatively supercoils closed circular double-stranded (ds) DNA in an ATP-dependent manner to modulate DNA topology and maintain chromosomes in an underwound state. Negative supercoiling favors strand separation, and DNA replication, transcription, recombination and repair, all of which involve strand separation. Also able to catalyze the interconversion of other topological isomers of dsDNA rings, including catenanes and knotted rings. Type II topoisomerases break and join 2 DNA strands simultaneously in an ATP-dependent manner. The polypeptide is DNA gyrase subunit A (Synechocystis sp. (strain ATCC 27184 / PCC 6803 / Kazusa)).